We begin with the raw amino-acid sequence, 435 residues long: uncharacterized protein (435 aa).

3 WD repeats span residues 105–149, 164–204, and 207–247; these read DLEY…GIDS, HNNA…SKTQ, and AHDK…HSTI. At serine 266 the chain carries Phosphoserine. The WD 4 repeat unit spans residues 313-353; it reads GHKGDVNAVKWMPGSKSKLATCGDDCVVSLWDLDQPVNPSP. The disordered stretch occupies residues 352–371; the sequence is SPAPTLSVSGTTPGMTGSTS. The segment covering 358-371 has biased composition (low complexity); the sequence is SVSGTTPGMTGSTS. Serine 388 bears the Phosphoserine mark.

It is found in the cytoplasm. The protein localises to the golgi apparatus. This is an uncharacterized protein from Schizosaccharomyces pombe (strain 972 / ATCC 24843) (Fission yeast).